The following is a 1026-amino-acid chain: Lon protease homolog, mitochondrial (1026 aa).

The transit peptide at 1 to 29 (MLGTRVTRAVYTRAPLKLQLRALGLHRRY) directs the protein to the mitochondrion. 2 disordered regions span residues 29 to 55 (YVHN…DKKL) and 185 to 206 (ASEE…DKVS). Positions 62–345 (MLALPISRRP…KSLLVLKKEL (284 aa)) constitute a Lon N-terminal domain. Over residues 185-194 (ASEETKDEET) the composition is skewed to acidic residues. Basic and acidic residues predominate over residues 195–206 (VDKTESATDKVS). 497 to 504 (GPPGVGKT) is a binding site for ATP. A disordered region spans residues 711–785 (TEPLVSTSEE…EEEEDTSMIV (75 aa)). Polar residues predominate over residues 714 to 737 (LVSTSEEPQLSQTNQNISSSSAED). The 187-residue stretch at 815–1001 (TTPPGVIMGL…DDIYKRLFSG (187 aa)) folds into the Lon proteolytic domain. Active-site residues include S907 and K950.

Belongs to the peptidase S16 family. In terms of assembly, homohexamer or homoheptamer. Organized in a ring with a central cavity.

It is found in the mitochondrion matrix. It carries out the reaction Hydrolysis of proteins in presence of ATP.. ATP-dependent serine protease that mediates the selective degradation of misfolded, unassembled or oxidatively damaged polypeptides as well as certain short-lived regulatory proteins in the mitochondrial matrix. May also have a chaperone function in the assembly of inner membrane protein complexes. Participates in the regulation of mitochondrial gene expression and in the maintenance of the integrity of the mitochondrial genome. Binds to mitochondrial DNA in a site-specific manner. The protein is Lon protease homolog, mitochondrial of Candida glabrata (strain ATCC 2001 / BCRC 20586 / JCM 3761 / NBRC 0622 / NRRL Y-65 / CBS 138) (Yeast).